The following is a 274-amino-acid chain: Large ribosomal subunit protein uL2 (274 aa).

Disordered stretches follow at residues lysine 21–lysine 59 and alanine 224–glycine 274. Over residues serine 32–glycine 42 the composition is skewed to low complexity. The span at asparagine 45 to lysine 59 shows a compositional bias: basic residues. Residues lysine 263–glycine 274 show a composition bias toward basic and acidic residues.

It belongs to the universal ribosomal protein uL2 family. In terms of assembly, part of the 50S ribosomal subunit. Forms a bridge to the 30S subunit in the 70S ribosome.

In terms of biological role, one of the primary rRNA binding proteins. Required for association of the 30S and 50S subunits to form the 70S ribosome, for tRNA binding and peptide bond formation. It has been suggested to have peptidyltransferase activity; this is somewhat controversial. Makes several contacts with the 16S rRNA in the 70S ribosome. The protein is Large ribosomal subunit protein uL2 of Wolbachia pipientis wMel.